Consider the following 637-residue polypeptide: Chaperone protein DnaK (637 aa).

Threonine 198 is subject to Phosphothreonine; by autocatalysis. Residues 597–637 form a disordered region; sequence MYAKTSQAGAGPQPGAGPGTGGQGPGKKDEDVVDADFEEVK. Residues 608–621 are compositionally biased toward gly residues; it reads PQPGAGPGTGGQGP. Acidic residues predominate over residues 627 to 637; the sequence is DVVDADFEEVK.

It belongs to the heat shock protein 70 family.

Functionally, acts as a chaperone. The polypeptide is Chaperone protein DnaK (Syntrophus aciditrophicus (strain SB)).